We begin with the raw amino-acid sequence, 293 residues long: Single-pass membrane and coiled-coil domain-containing protein 2 (293 aa).

Residues 116–188 (KNLLEFLLKD…SAKLRMYQME (73 aa)) adopt a coiled-coil conformation. A helical transmembrane segment spans residues 234-254 (IFIMFYVLTVTGLLCYILFFG).

Its subcellular location is the membrane. This is Single-pass membrane and coiled-coil domain-containing protein 2 (SMCO2) from Macaca fascicularis (Crab-eating macaque).